The primary structure comprises 171 residues: Lipoprotein signal peptidase (171 aa).

4 helical membrane passes run 12-32 (LAWL…KLYF), 42-62 (IVVI…AAFS), 70-90 (WQRW…VVWL), and 96-116 (NETW…GNLY). Catalysis depends on residues D126 and D145. The helical transmembrane segment at 137-157 (YFPAFNVADSAITVGAVMLAL) threads the bilayer.

Belongs to the peptidase A8 family.

Its subcellular location is the cell inner membrane. The enzyme catalyses Release of signal peptides from bacterial membrane prolipoproteins. Hydrolyzes -Xaa-Yaa-Zaa-|-(S,diacylglyceryl)Cys-, in which Xaa is hydrophobic (preferably Leu), and Yaa (Ala or Ser) and Zaa (Gly or Ala) have small, neutral side chains.. It participates in protein modification; lipoprotein biosynthesis (signal peptide cleavage). This protein specifically catalyzes the removal of signal peptides from prolipoproteins. The chain is Lipoprotein signal peptidase from Pseudomonas putida (strain ATCC 47054 / DSM 6125 / CFBP 8728 / NCIMB 11950 / KT2440).